We begin with the raw amino-acid sequence, 95 residues long: Co-chaperonin GroES (95 aa).

This sequence belongs to the GroES chaperonin family. As to quaternary structure, heptamer of 7 subunits arranged in a ring. Interacts with the chaperonin GroEL.

The protein localises to the cytoplasm. Together with the chaperonin GroEL, plays an essential role in assisting protein folding. The GroEL-GroES system forms a nano-cage that allows encapsulation of the non-native substrate proteins and provides a physical environment optimized to promote and accelerate protein folding. GroES binds to the apical surface of the GroEL ring, thereby capping the opening of the GroEL channel. This is Co-chaperonin GroES from Francisella philomiragia subsp. philomiragia (strain ATCC 25017 / CCUG 19701 / FSC 153 / O#319-036).